Here is a 759-residue protein sequence, read N- to C-terminus: DNA topoisomerase 3 (759 aa).

Residues 3-147 (RALFVAEKND…RLDIFRARFS (145 aa)) enclose the Toprim domain. A Topo IA-type catalytic domain is found at 165–590 (DEKTVAAVDC…EQIGKYRAIF (426 aa)). The active-site O-(5'-phospho-DNA)-tyrosine intermediate is Tyr334. Residues 609–715 (DKNNQAGGGP…KEQEEEEEVF (107 aa)) form a disordered region. Over residues 614-639 (AGGGPGGPGGGGGPPRGPGGGGGGGP) the composition is skewed to gly residues. Pro residues predominate over residues 640–649 (TGPPAPPKPP). Zn(2+)-binding residues include Cys716, Cys718, Cys743, and Cys753. The segment at 716 to 759 (CQCPEPMRAVTKVVQKEGPNKGKKFYTCSLPYTSSEKCNFFKWA) adopts a GRF-type zinc-finger fold.

Belongs to the type IA topoisomerase family. In terms of assembly, component of the BTR double Holliday Junction dissolution complex composed of at least him-6, top-3, rmh-1 and rmif-2, which is involved in double strand break repair in the germline. May interact with rmh-1.

The protein localises to the nucleus. It carries out the reaction ATP-independent breakage of single-stranded DNA, followed by passage and rejoining.. Its function is as follows. Component of the BTR double Holliday Junction dissolution complex, which is involved in homologous recombination during meiotic double strand break in the germline. Releases the supercoiling and torsional tension of DNA introduced during the DNA replication and transcription by transiently cleaving and rejoining one strand of the DNA duplex. Introduces a single-strand break via transesterification at a target site in duplex DNA. The scissile phosphodiester is attacked by the catalytic tyrosine of the enzyme, resulting in the formation of a DNA-(5'-phosphotyrosyl)-enzyme intermediate and the expulsion of a 3'-OH DNA strand. The free DNA strand than undergoes passage around the unbroken strand thus removing DNA supercoils. Finally, in the religation step, the DNA 3'-OH attacks the covalent intermediate to expel the active-site tyrosine and restore the DNA phosphodiester backbone. This chain is DNA topoisomerase 3, found in Caenorhabditis elegans.